Here is a 296-residue protein sequence, read N- to C-terminus: Lipoyl synthase (296 aa).

Positions 37, 42, 48, 63, 67, 70, and 276 each coordinate [4Fe-4S] cluster. In terms of domain architecture, Radical SAM core spans 49 to 265; sequence WSKKHTTVMI…ERVAKTKGFL (217 aa).

The protein belongs to the radical SAM superfamily. Lipoyl synthase family. [4Fe-4S] cluster is required as a cofactor.

The protein localises to the cytoplasm. The catalysed reaction is [[Fe-S] cluster scaffold protein carrying a second [4Fe-4S](2+) cluster] + N(6)-octanoyl-L-lysyl-[protein] + 2 oxidized [2Fe-2S]-[ferredoxin] + 2 S-adenosyl-L-methionine + 4 H(+) = [[Fe-S] cluster scaffold protein] + N(6)-[(R)-dihydrolipoyl]-L-lysyl-[protein] + 4 Fe(3+) + 2 hydrogen sulfide + 2 5'-deoxyadenosine + 2 L-methionine + 2 reduced [2Fe-2S]-[ferredoxin]. Its pathway is protein modification; protein lipoylation via endogenous pathway; protein N(6)-(lipoyl)lysine from octanoyl-[acyl-carrier-protein]: step 2/2. Catalyzes the radical-mediated insertion of two sulfur atoms into the C-6 and C-8 positions of the octanoyl moiety bound to the lipoyl domains of lipoate-dependent enzymes, thereby converting the octanoylated domains into lipoylated derivatives. This is Lipoyl synthase from Rickettsia peacockii (strain Rustic).